The primary structure comprises 149 residues: Calmodulin (149 aa).

Ala-2 is subject to N-acetylalanine. 4 consecutive EF-hand domains span residues Glu-8–Asn-43, Pro-44–Asp-79, Asp-81–Lys-116, and Leu-117–Lys-149. Ca(2+) is bound by residues Asp-21, Asp-23, Asp-25, Thr-27, Glu-32, Asp-57, Asp-59, Asn-61, Thr-63, Glu-68, Asp-94, Asp-96, Asn-98, and Glu-105. Lys-116 bears the N6,N6,N6-trimethyllysine mark. Ca(2+) is bound by residues Asp-130, Asp-132, Asp-134, Gln-136, and Glu-141.

Belongs to the calmodulin family.

Its function is as follows. Calmodulin mediates the control of a large number of enzymes, ion channels and other proteins by Ca(2+). Among the enzymes to be stimulated by the calmodulin-Ca(2+) complex are a number of protein kinases and phosphatases. This Macrocystis pyrifera (Giant kelp) protein is Calmodulin.